Reading from the N-terminus, the 465-residue chain is MAKTLYQKVFEAHVVYEAAGETPIIYIDRHLVHEVTSPQAFDGLREKGRKVRRTDRTWATMDHNVSTTSNDINASGEMARVQMQTLMKNTDDFGVPLYGLNHKWQGIVHVMGPEIGLTLPGTTIVCGDSHTATHGAFGALAFGIGTSEVEHVLATQTLKQSRAKTMKIEVTGKVGPGVTAKDIVLAIIGKTGTAGGTGYVVEFCGTAIQALTMEERMTVCNMAIELGAKAGMVAADQTTFDYLKGRPFAPKGADWDAAVEYWSTLKTDAGAKFDAELVLDGAAIEPQVTWGTNPGQVISINTPIPAPEDFADPVARSSAQKALEYMALTAGQKLSDVKIDKAFIGSCTNGRIEDIRAAAAVAKGRKVAPGVQALVVPGSQQVKAQAEAEGLDKILTEAGFEWRLPGCSMCLAMNNDRLEPGERCAATSNRNFEGRQGRGGRTHLVSPAMAAAAAITGHFVDVREL.

Residues Cys-347, Cys-407, and Cys-410 each coordinate [4Fe-4S] cluster.

The protein belongs to the aconitase/IPM isomerase family. LeuC type 1 subfamily. As to quaternary structure, heterodimer of LeuC and LeuD. [4Fe-4S] cluster serves as cofactor.

It catalyses the reaction (2R,3S)-3-isopropylmalate = (2S)-2-isopropylmalate. It participates in amino-acid biosynthesis; L-leucine biosynthesis; L-leucine from 3-methyl-2-oxobutanoate: step 2/4. Its function is as follows. Catalyzes the isomerization between 2-isopropylmalate and 3-isopropylmalate, via the formation of 2-isopropylmaleate. The chain is 3-isopropylmalate dehydratase large subunit from Tolumonas auensis (strain DSM 9187 / NBRC 110442 / TA 4).